A 471-amino-acid polypeptide reads, in one-letter code: MPTPLILHDDRLLPADPATRAIARRLYAQTAALPIISPHGHTDPAWFATDAPFANATELLLVPDHYVFRMLYSQGIDLDQLGIPHADGSRAPVDPREAWRVFASQFALLRGTPSALWLNHVFHQVFDLRIRLDAGSADHYYDHITAALQTPAFRPRALFERFNIEVIATTESPLDTLEHHATIRDSGWSGRVLTAYRPDAVVDPEHEQFASALQQFGALTGEDVMQWPGYLRAHRQRRAFFAAAGATSTDHGHPSAATADLSPAEAQRLFDTVVRGQATPAQAELFRAQVLTEMAAMSVDDGLVMQLHPGCFRNHNRALFERYGRDKGADIPMRTDYVHALKPLLDRFGNDPRFRLIVFTLDETSYSRELAPLAGHYPALLLGPAWWFHDAPEGMWRFREQTLASAGFYNTVGFNDDTRAFLSIPARHDVARRVDSAFLAKLVAEHRLDEDEAMEVAIDLAYRLPKQAYKL.

It belongs to the metallo-dependent hydrolases superfamily. Uronate isomerase family.

The catalysed reaction is D-glucuronate = D-fructuronate. It catalyses the reaction aldehydo-D-galacturonate = keto-D-tagaturonate. It functions in the pathway carbohydrate metabolism; pentose and glucuronate interconversion. The polypeptide is Uronate isomerase (Xanthomonas campestris pv. campestris (strain B100)).